A 392-amino-acid polypeptide reads, in one-letter code: Bone morphogenetic protein 15 (392 aa).

The first 18 residues, Met1–Phe18, serve as a signal peptide directing secretion. The propeptide occupies Met19–Arg267. N-linked (GlcNAc...) asparagine glycosylation is found at Asn87, Asn147, and Asn237. Residue Gln268 is modified to Pyrrolidone carboxylic acid; in P16 and P17. Residue Ser273 is modified to Phosphoserine; in P16. Thr277 carries O-linked (HexNAc...) threonine; in P17 glycosylation. 3 cysteine pairs are disulfide-bonded: Cys291–Cys357, Cys320–Cys389, and Cys324–Cys391. Residue Asn373 is glycosylated (N-linked (GlcNAc...) asparagine).

It belongs to the TGF-beta family. As to quaternary structure, homodimer. But, in contrast to other members of this family, cannot be disulfide-linked.

It localises to the secreted. In terms of biological role, may be involved in follicular development. Oocyte-specific growth/differentiation factor that stimulates folliculogenesis and granulosa cell (GC) growth. This is Bone morphogenetic protein 15 (BMP15) from Homo sapiens (Human).